The sequence spans 416 residues: Serine hydroxymethyltransferase (416 aa).

Residues L118 and 122-124 (GHL) each bind (6S)-5,6,7,8-tetrahydrofolate. Residue K226 is modified to N6-(pyridoxal phosphate)lysine. (6S)-5,6,7,8-tetrahydrofolate contacts are provided by residues E242 and 350–352 (SPF).

This sequence belongs to the SHMT family. In terms of assembly, homodimer. The cofactor is pyridoxal 5'-phosphate.

It is found in the cytoplasm. It catalyses the reaction (6R)-5,10-methylene-5,6,7,8-tetrahydrofolate + glycine + H2O = (6S)-5,6,7,8-tetrahydrofolate + L-serine. Its pathway is one-carbon metabolism; tetrahydrofolate interconversion. It participates in amino-acid biosynthesis; glycine biosynthesis; glycine from L-serine: step 1/1. In terms of biological role, catalyzes the reversible interconversion of serine and glycine with tetrahydrofolate (THF) serving as the one-carbon carrier. This reaction serves as the major source of one-carbon groups required for the biosynthesis of purines, thymidylate, methionine, and other important biomolecules. Also exhibits THF-independent aldolase activity toward beta-hydroxyamino acids, producing glycine and aldehydes, via a retro-aldol mechanism. This chain is Serine hydroxymethyltransferase, found in Helicobacter hepaticus (strain ATCC 51449 / 3B1).